Consider the following 238-residue polypeptide: Phosphoglycolate phosphatase (238 aa).

Aspartate 8 (nucleophile) is an active-site residue. Residues aspartate 8 and aspartate 10 each contribute to the Mg(2+) site. A substrate-binding site is contributed by lysine 163. Residues aspartate 186 and aspartate 190 each contribute to the Mg(2+) site.

The protein belongs to the archaeal SPP-like hydrolase family. Mg(2+) serves as cofactor.

It catalyses the reaction 2-phosphoglycolate + H2O = glycolate + phosphate. Functionally, catalyzes the dephosphorylation of 2-phosphoglycolate. The chain is Phosphoglycolate phosphatase from Staphylothermus marinus (strain ATCC 43588 / DSM 3639 / JCM 9404 / F1).